The following is a 414-amino-acid chain: CinA-like protein (414 aa).

It belongs to the CinA family.

This Citrifermentans bemidjiense (strain ATCC BAA-1014 / DSM 16622 / JCM 12645 / Bem) (Geobacter bemidjiensis) protein is CinA-like protein.